We begin with the raw amino-acid sequence, 554 residues long: MRREGTTRLHRTFLLRVYLKESAVITYPASKKIYCQGKIFPTIRVGMREIQLTNGDSLTLYDTSGPYSDPNISIKSPQGLPRLREPWIKVRPRKTQLAFAKEGVITPEMEYAAIRENQKRELKKNTDQERERRLQGNSLSARIPNPITPEFIRNEIACGRAILPANINHPESEPMIIGRHFLVKVNANIGNSSLTSSVEEEVEKLIWALRWGADTVMDLSTGKKIKEIRETILRHSPVPIGTVPLYEALEKVDGDVKALTWEIFRDTLISQAEQGVDYFTIHAGVLNRFIPLTQKRVTGIVSRGGSLMAKWCLLHREENFLYTHFTEICEIMRAYDVSFSLGDGLRPGSIADANDEAQFAELKIQGELNRIAWKYGVQVMNEGPGHIPLNLIEENMTKQLAYCREAPFYTLGPLTTDIAPGYDHIGSAIGAAFIAWQGCALLCYVTPKEHLGLPNKQDVKEGLIAYKIAAHAADLAKGHPAARQRDDLLSQARFEFRWHDQFNLALDAETARLFHDETLPKEAAKHAHFCSLCGPKFCAYKTSHEVRDTLQKVT.

Substrate-binding positions include Asn188, Met217, Tyr246, His282, 302-304 (SRG), 343-346 (DGLR), and Glu382. Position 386 (His386) interacts with Zn(2+). Tyr409 contacts substrate. Position 450 (His450) interacts with Zn(2+). Residues Cys530, Cys533, and Cys538 each coordinate [4Fe-4S] cluster.

It belongs to the ThiC family. In terms of assembly, homodimer. [4Fe-4S] cluster is required as a cofactor.

It catalyses the reaction 5-amino-1-(5-phospho-beta-D-ribosyl)imidazole + S-adenosyl-L-methionine = 4-amino-2-methyl-5-(phosphooxymethyl)pyrimidine + CO + 5'-deoxyadenosine + formate + L-methionine + 3 H(+). It functions in the pathway cofactor biosynthesis; thiamine diphosphate biosynthesis. In terms of biological role, catalyzes the synthesis of the hydroxymethylpyrimidine phosphate (HMP-P) moiety of thiamine from aminoimidazole ribotide (AIR) in a radical S-adenosyl-L-methionine (SAM)-dependent reaction. The polypeptide is Phosphomethylpyrimidine synthase (Coxiella burnetii (strain CbuK_Q154) (Coxiella burnetii (strain Q154))).